Consider the following 80-residue polypeptide: Antitoxin VapB15 (80 aa).

Positions 60-80 are disordered; it reads DFSNDEIESFSDTDRKLADES. Glutamate 67 serves as a coordination point for Mg(2+). Glutamate 67 is a Mn(2+) binding site. Residues 71–80 are compositionally biased toward basic and acidic residues; that stretch reads DTDRKLADES.

As to quaternary structure, forms a VapB15-VapC15(2) heterotrimer and a VapB15(2)-VapC15(2) heterotetramer; each toxin pair forms a homodimer which creates a channel in which the antitoxin binds. The cofactor is Mg(2+). Mn(2+) is required as a cofactor.

In terms of biological role, antitoxin component of a type II toxin-antitoxin (TA) system. Neutralizes the toxic effect of cognate toxin VapC15. The chain is Antitoxin VapB15 (vapB15) from Mycobacterium tuberculosis (strain CDC 1551 / Oshkosh).